Here is a 60-residue protein sequence, read N- to C-terminus: Conotoxin Cl1.1 (60 aa).

The N-terminal stretch at 1–19 (MRCLPVIVILLLLISSAAA) is a signal peptide. Positions 20 to 48 (VVEGPLRVNRRLRPRKAPVDMQARDWNWG) are excised as a propeptide.

Belongs to the conotoxin T superfamily. Contains 2 disulfide bonds. Expressed by the venom duct.

It is found in the secreted. The sequence is that of Conotoxin Cl1.1 from Californiconus californicus (California cone).